We begin with the raw amino-acid sequence, 1214 residues long: MAVRKKDGGPNVKYYEAADTVTQFDNVRLWLGKNYKKYIQAEPPTNKSLSSLVVQLLQFQEEVFGKHVSNAPLTKLPIKCFLDFKAGGSLCHILAAAYKFKSDQGWRRYDFQNPSRMDRNVEMFMTIEKSLVQNNCLSRPNIFLCPEIEPKLLGKLKDIIKRHQGTVTEDKNNASHVVYPVPGNLEEEEWVRPVMKRDKQVLLHWGYYPDSYDTWIPASEIEASVEDAPTPEKPRKVHAKWILDTDTFNEWMNEEDYEVNDDKNPVSRRKKISAKTLTDEVNSPDSDRRDKKGGNYKKRKRSPSPSPTPEAKKKNAKKGPSTPYTKSKRGHREEEQEDLTKDMDEPSPVPNVEEVTLPKTVNTKKDSESAPVKGGTMTDLDEQEDESMETTGKDEDENSTGNKGEQTKNPDLHEDNVTEQTHHIIIPSYAAWFDYNSVHAIERRALPEFFNGKNKSKTPEIYLAYRNFMIDTYRLNPQEYLTSTACRRNLAGDVCAIMRVHAFLEQWGLINYQVDAESRPTPMGPPPTSHFHVLADTPSGLVPLQPKTPQQTSASQQMLNFPDKGKEKPTDMQNFGLRTDMYTKKNVPSKSKAAASATREWTEQETLLLLEALEMYKDDWNKVSEHVGSRTQDECILHFLRLPIEDPYLEDSEASLGPLAYQPIPFSQSGNPVMSTVAFLASVVDPRVASAAAKSALEEFSKMKEEVPTALVEAHVRKVEEAAKVTGKADPAFGLESSGIAGTTSDEPERIEESGNDEARVEGQATDEKKEPKEPREGGGAIEEEAKEKTSEAPKKDEEKGKEGDSEKESEKSDGDPIVDPEKEKEPKEGQEEVLKEVVESEGERKTKVERDIGEGNLSTAAAAALAAAAVKAKHLAAVEERKIKSLVALLVETQMKKLEIKLRHFEELETIMDREREALEYQRQQLLADRQAFHMEQLKYAEMRARQQHFQQMHQQQQQPPPALPPGSQPIPPTGAAGPPAVHGLAVAPASVVPAPAGSGAPPGSLGPSEQIGQAGSTAGPQQQQPAGAPQPGAVPPGVPPPGPHGPSPFPNQQTPPSMMPGAVPGSGHPGVAGNAPLGLPFGMPPPPPPPAPSIIPFGSLADSISINLPAPPNLHGHHHHLPFAPGTLPPPNLPVSMANPLHPNLPATTTMPSSLPLGPGLGSAAAQSPAIVAAVQGNLLPSASPLPDPGTPLPPDPTAPSPGTVTPVPPPQ.

Positions 1–274 (MAVRKKDGGP…PVSRRKKISA (274 aa)) are marR-like, BRCT and chromo domains module. Positions 10–136 (PNVKYYEAAD…IEKSLVQNNC (127 aa)) constitute a MarR-like domain. Residues 140–183 (PNIFLCPEIEPKLLGKLKDIIKRHQGTVTEDKNNASHVVYPVPG) form the BRCT; N-terminus domain. In terms of domain architecture, Chromo spans 189-217 (EWVRPVMKRDKQVLLHWGYYPDSYDTWIP). The BRCT; C-terminus domain maps to 233–257 (KPRKVHAKWILDTDTFNEWMNEEDY). The interval 257 to 413 (YEVNDDKNPV…GEQTKNPDLH (157 aa)) is disordered. The segment covering 275–284 (KTLTDEVNSP) has biased composition (polar residues). Residues Ser-283, Ser-286, Ser-302, Ser-304, and Ser-306 each carry the phosphoserine modification. Position 312 is an N6-(ADP-ribosyl)lysine (Lys-312). N6-acetyllysine is present on Lys-326. Over residues 331-344 (HREEEQEDLTKDMD) the composition is skewed to basic and acidic residues. Phosphoserine occurs at positions 347 and 387. Over residues 379–398 (DLDEQEDESMETTGKDEDEN) the composition is skewed to acidic residues. The 98-residue stretch at 424–521 (IIIPSYAAWF…YQVDAESRPT (98 aa)) folds into the SWIRM domain. Thr-548 is subject to Phosphothreonine. Residues Lys-564, Lys-566, Lys-568, and Lys-592 each participate in a glycyl lysine isopeptide (Lys-Gly) (interchain with G-Cter in SUMO2) cross-link. The SANT domain occupies 596–647 (SATREWTEQETLLLLEALEMYKDDWNKVSEHVGSRTQDECILHFLRLPIEDP). Lys-704 is covalently cross-linked (Glycyl lysine isopeptide (Lys-Gly) (interchain with G-Cter in SUMO2)). Residues 724-852 (KVTGKADPAF…GERKTKVERD (129 aa)) are disordered. Basic and acidic residues-rich tracts occupy residues 747–777 (EPERIEESGNDEARVEGQATDEKKEPKEPRE) and 784–852 (EEAK…VERD). Residue Lys-787 forms a Glycyl lysine isopeptide (Lys-Gly) (interchain with G-Cter in SUMO2) linkage. Ser-813 carries the phosphoserine modification. Lys-848 participates in a covalent cross-link: Glycyl lysine isopeptide (Lys-Gly) (interchain with G-Cter in SUMO2). A coiled-coil region spans residues 907-934 (EELETIMDREREALEYQRQQLLADRQAF). Disordered stretches follow at residues 947 to 983 (RQQHFQQMHQQQQQPPPALPPGSQPIPPTGAAGPPAV), 997 to 1092 (PAGS…PPPP), and 1182 to 1214 (LPSASPLPDPGTPLPPDPTAPSPGTVTPVPPPQ). Low complexity predominate over residues 949 to 959 (QHFQQMHQQQQ). Residues 960 to 974 (QPPPALPPGSQPIPP) are compositionally biased toward pro residues. Residues 997 to 1033 (PAGSGAPPGSLGPSEQIGQAGSTAGPQQQQPAGAPQP) show a composition bias toward low complexity. Composition is skewed to pro residues over residues 1034-1051 (GAVPPGVPPPGPHGPSPF) and 1186-1202 (SPLPDPGTPLPPDPTAP).

This sequence belongs to the SMARCC family. Component of the multiprotein chromatin-remodeling complexes SWI/SNF: SWI/SNF-A (BAF), SWI/SNF-B (PBAF) and related complexes. The canonical complex contains a catalytic subunit (either SMARCA4/BRG1/BAF190A or SMARCA2/BRM/BAF190B) and at least SMARCE1, ACTL6A/BAF53, SMARCC1/BAF155, SMARCC2/BAF170, and SMARCB1/SNF5/BAF47. Other subunits specific to each of the complexes may also be present permitting several possible combinations developmentally and tissue specific. Component of the BAF complex, which includes at least actin (ACTB), ARID1A/BAF250A, ARID1B/BAF250B, SMARCA2/BRM, SMARCA4/BRG1, ACTL6A/BAF53, ACTL6B/BAF53B, SMARCE1/BAF57, SMARCC1/BAF155, SMARCC2/BAF170, SMARCB1/SNF5/INI1, and one or more SMARCD1/BAF60A, SMARCD2/BAF60B, or SMARCD3/BAF60C. In muscle cells, the BAF complex also contains DPF3. Component of neural progenitors-specific chromatin remodeling complex (npBAF complex) composed of at least, ARID1A/BAF250A or ARID1B/BAF250B, SMARCD1/BAF60A, SMARCD3/BAF60C, SMARCA2/BRM/BAF190B, SMARCA4/BRG1/BAF190A, SMARCB1/BAF47, SMARCC1/BAF155, SMARCE1/BAF57, SMARCC2/BAF170, PHF10/BAF45A, ACTL6A/BAF53A and actin. Component of neuron-specific chromatin remodeling complex (nBAF complex) composed of at least, ARID1A/BAF250A or ARID1B/BAF250B, SMARCD1/BAF60A, SMARCD3/BAF60C, SMARCA2/BRM/BAF190B, SMARCA4/BRG1/BAF190A, SMARCB1/BAF47, SMARCC1/BAF155, SMARCE1/BAF57, SMARCC2/BAF170, DPF1/BAF45B, DPF3/BAF45C, ACTL6B/BAF53B and actin. Component of the SWI/SNF-B (PBAF) chromatin remodeling complex, at least composed of SMARCA4/BRG1, SMARCB1/BAF47/SNF5, ACTL6A/BAF53A or ACTL6B/BAF53B, SMARCE1/BAF57, SMARCD1/BAF60A, SMARCD2/BAF60B, perhaps SMARCD3/BAF60C, SMARCC1/BAF155, SMARCC2/BAF170, PBRM1/BAF180, ARID2/BAF200 and actin. May also interact with the SIN3A histone deacetylase transcription repressor complex in conjunction with SMARCA2 and SMARCA4. Interacts with SMARD1. Interacts with KDM6B. Interaction with RCOR1. Interacts with DPF2. Interacts with ERCC6. Interacts with FOS. In terms of processing, mono-ADP-ribosylation at Lys-312 by SIRT6 promotes recruitment to the enhancer region of the Heme oxygenase-1 (HO-1) locus, leading to transcription activation of the locus. Ubiquitously expressed.

The protein resides in the nucleus. Functionally, involved in transcriptional activation and repression of select genes by chromatin remodeling (alteration of DNA-nucleosome topology). Component of SWI/SNF chromatin remodeling complexes that carry out key enzymatic activities, changing chromatin structure by altering DNA-histone contacts within a nucleosome in an ATP-dependent manner. Can stimulate the ATPase activity of the catalytic subunit of these complexes. May be required for CoREST dependent repression of neuronal specific gene promoters in non-neuronal cells. Belongs to the neural progenitors-specific chromatin remodeling complex (npBAF complex) and the neuron-specific chromatin remodeling complex (nBAF complex). During neural development a switch from a stem/progenitor to a postmitotic chromatin remodeling mechanism occurs as neurons exit the cell cycle and become committed to their adult state. The transition from proliferating neural stem/progenitor cells to postmitotic neurons requires a switch in subunit composition of the npBAF and nBAF complexes. As neural progenitors exit mitosis and differentiate into neurons, npBAF complexes which contain ACTL6A/BAF53A and PHF10/BAF45A, are exchanged for homologous alternative ACTL6B/BAF53B and DPF1/BAF45B or DPF3/BAF45C subunits in neuron-specific complexes (nBAF). The npBAF complex is essential for the self-renewal/proliferative capacity of the multipotent neural stem cells. The nBAF complex along with CREST plays a role regulating the activity of genes essential for dendrite growth. Critical regulator of myeloid differentiation, controlling granulocytopoiesis and the expression of genes involved in neutrophil granule formation. The sequence is that of SWI/SNF complex subunit SMARCC2 (SMARCC2) from Homo sapiens (Human).